The sequence spans 131 residues: Methylglyoxal synthase (131 aa).

The MGS-like domain occupies 1-131 (MKIALIAHDK…GDLDYRKLRK (131 aa)). Residues His-8, Lys-12, 34–37 (TGTT), and 54–55 (SG) contribute to the substrate site. Asp-60 serves as the catalytic Proton donor/acceptor. A substrate-binding site is contributed by His-87.

The protein belongs to the methylglyoxal synthase family.

It catalyses the reaction dihydroxyacetone phosphate = methylglyoxal + phosphate. In terms of biological role, catalyzes the formation of methylglyoxal from dihydroxyacetone phosphate. This chain is Methylglyoxal synthase, found in Bacillus anthracis (strain A0248).